Reading from the N-terminus, the 232-residue chain is Ubiquinone biosynthesis O-methyltransferase (232 aa).

4 residues coordinate S-adenosyl-L-methionine: Arg-36, Gly-55, Asp-76, and Leu-120.

It belongs to the methyltransferase superfamily. UbiG/COQ3 family.

The enzyme catalyses a 3-demethylubiquinol + S-adenosyl-L-methionine = a ubiquinol + S-adenosyl-L-homocysteine + H(+). It catalyses the reaction a 3-(all-trans-polyprenyl)benzene-1,2-diol + S-adenosyl-L-methionine = a 2-methoxy-6-(all-trans-polyprenyl)phenol + S-adenosyl-L-homocysteine + H(+). It participates in cofactor biosynthesis; ubiquinone biosynthesis. Functionally, O-methyltransferase that catalyzes the 2 O-methylation steps in the ubiquinone biosynthetic pathway. The polypeptide is Ubiquinone biosynthesis O-methyltransferase (Pseudomonas aeruginosa (strain LESB58)).